The primary structure comprises 353 residues: Inactive metacaspase-4 (353 aa).

Glycine 2 carries N-myristoyl glycine lipidation.

It belongs to the peptidase C14B family. In terms of processing, palmitoylated. Post-translationally, proteolytic cleavage by MCA3 occurs prior or during secretion and requires MCA4 membrane localization. Cleavage is dispensable for secretion and parasite growth and virulence in the mammalian host. In vitro, can be cleaved by MCA2 but specifically cleaved by MCA3 in vivo.

Its subcellular location is the cell projection. It is found in the cilium. It localises to the flagellum membrane. The protein localises to the secreted. Inactive metacaspase which plays a role in parasite bloodstream form growth and in parasite virulence within the mammalian host. The protein is Inactive metacaspase-4 of Trypanosoma brucei brucei.